The sequence spans 156 residues: Cytochrome c-type biogenesis protein CcmE 2 (156 aa).

Over 1–8 (MNPQRRRR) the chain is Cytoplasmic. The helical; Signal-anchor for type II membrane protein transmembrane segment at 9–29 (LWWVLALLLAGGLATTLVSMA) threads the bilayer. Over 30–156 (LQRNVAYLYT…AAANQGGALR (127 aa)) the chain is Periplasmic. Positions 123 and 127 each coordinate heme. The interval 135-156 (KMGSAHRKHDVPAAANQGGALR) is disordered.

The protein belongs to the CcmE/CycJ family.

It localises to the cell inner membrane. In terms of biological role, heme chaperone required for the biogenesis of c-type cytochromes. Transiently binds heme delivered by CcmC and transfers the heme to apo-cytochromes in a process facilitated by CcmF and CcmH. The sequence is that of Cytochrome c-type biogenesis protein CcmE 2 from Xanthomonas oryzae pv. oryzae (strain MAFF 311018).